The chain runs to 239 residues: Small ribosomal subunit protein uS2 (239 aa).

Belongs to the universal ribosomal protein uS2 family.

In Prochlorococcus marinus (strain MIT 9303), this protein is Small ribosomal subunit protein uS2.